The primary structure comprises 120 residues: Glycine cleavage system H protein (120 aa).

The Lipoyl-binding domain occupies 17-99; the sequence is VATVGITAHA…QGDGWLYRLK (83 aa). Position 58 is an N6-lipoyllysine (K58).

Belongs to the GcvH family. As to quaternary structure, the glycine cleavage system is composed of four proteins: P, T, L and H. (R)-lipoate is required as a cofactor.

Functionally, the glycine cleavage system catalyzes the degradation of glycine. The H protein shuttles the methylamine group of glycine from the P protein to the T protein. The polypeptide is Glycine cleavage system H protein (Methylorubrum extorquens (strain PA1) (Methylobacterium extorquens)).